The primary structure comprises 614 residues: Sulfite reductase [NADPH] flavoprotein alpha-component (614 aa).

Residues Leu79 to Leu217 form the Flavodoxin-like domain. FMN-binding positions include Ser85 to Ala90, Ser132 to Gly135, and Leu168 to Cys177. One can recognise an FAD-binding FR-type domain in the interval Glu249 to Pro463. Residues Thr337, Thr371, Arg401–Ser404, Thr419–Gly421, Tyr425, and Gly434–Ser437 contribute to the FAD site. Residues Ser534–Arg535, Lys540–Gln544, and Asp576 contribute to the NADP(+) site. Tyr614 provides a ligand contact to FAD.

The protein belongs to the NADPH-dependent sulphite reductase flavoprotein subunit CysJ family. This sequence in the N-terminal section; belongs to the flavodoxin family. It in the C-terminal section; belongs to the flavoprotein pyridine nucleotide cytochrome reductase family. As to quaternary structure, alpha(8)-beta(8). The alpha component is a flavoprotein, the beta component is a hemoprotein. FAD serves as cofactor. FMN is required as a cofactor.

It carries out the reaction hydrogen sulfide + 3 NADP(+) + 3 H2O = sulfite + 3 NADPH + 4 H(+). It participates in sulfur metabolism; hydrogen sulfide biosynthesis; hydrogen sulfide from sulfite (NADPH route): step 1/1. Component of the sulfite reductase complex that catalyzes the 6-electron reduction of sulfite to sulfide. This is one of several activities required for the biosynthesis of L-cysteine from sulfate. The flavoprotein component catalyzes the electron flow from NADPH -&gt; FAD -&gt; FMN to the hemoprotein component. This Vibrio cholerae serotype O1 (strain ATCC 39315 / El Tor Inaba N16961) protein is Sulfite reductase [NADPH] flavoprotein alpha-component.